A 736-amino-acid chain; its full sequence is Zinc finger CCCH domain-containing protein 14 (736 aa).

At M1 the chain carries N-acetylmethionine. Residues 77–103 are compositionally biased toward polar residues; that stretch reads TTEPSSLKSPDTSIFDSNVPSNKSSFS. The segment at 77-153 is disordered; sequence TTEPSSLKSP…RHSYDDGAST (77 aa). S85 bears the Phosphoserine mark. Glycyl lysine isopeptide (Lys-Gly) (interchain with G-Cter in SUMO2) cross-links involve residues K99, K139, K175, and K198. Residues 123–148 are compositionally biased toward basic and acidic residues; the sequence is RPEKRDSRVSTSSQEHKSTNVRHSYD. S240 carries the post-translational modification Phosphoserine. Glycyl lysine isopeptide (Lys-Gly) (interchain with G-Cter in SUMO2) cross-links involve residues K245, K283, and K295. A disordered region spans residues 308–350; that stretch reads FSHDGEEEEEDEDYGTRVGSLSSSVSVPAKPERRPSLPPSKQA. 3 positions are modified to phosphoserine: S309, S327, and S343. At K357 the chain carries N6-acetyllysine; alternate. K357 participates in a covalent cross-link: Glycyl lysine isopeptide (Lys-Gly) (interchain with G-Cter in SUMO2); alternate. A compositionally biased stretch (polar residues) spans 367–380; it reads TKTTNYPAVPQKQT. The disordered stretch occupies residues 367–386; the sequence is TKTTNYPAVPQKQTLPVAPR. K378 participates in a covalent cross-link: Glycyl lysine isopeptide (Lys-Gly) (interchain with G-Cter in SUMO2). Phosphoserine is present on residues S390 and S409. The interval 400 to 420 is disordered; that stretch reads QGQNRAPRISPPVKEEEAKGD. Glycyl lysine isopeptide (Lys-Gly) (interchain with G-Cter in SUMO2) cross-links involve residues K413 and K489. Phosphoserine is present on residues S498, S515, S527, and S620. 5 C3H1-type zinc fingers span residues 595–620, 621–640, 641–656, 682–699, and 701–719; these read EKLL…HPIS, PCKA…VHPN, CKYD…PFTH, CRYF…YHPK, and CRFN…HPTI.

The protein belongs to the ZC3H14 family. Homodimer; facilitating circular RNAs (circRNAs) formation. Associates with the spliceosome. Interacts with HOOK2. Interacts with ZFC3H1 in a RNase-sensitive manner.

It is found in the nucleus speckle. Functionally, RNA-binding protein involved in the biogenesis of circular RNAs (circRNAs), which are produced by back-splicing circularization of pre-mRNAs. Acts by binding to both exon-intron boundary and 3'-UTR of pre-mRNAs to promote circRNA biogenesis through dimerization and the association with the spliceosome. Required for spermatogenesis via involvement in circRNA biogenesis. Regulates the pre-mRNA processing of ATP5MC1; preventing its degradation. Also binds the poly(A) tail of mRNAs; controlling poly(A) length in neuronal cells. This is Zinc finger CCCH domain-containing protein 14 from Rattus norvegicus (Rat).